A 397-amino-acid polypeptide reads, in one-letter code: Acetate kinase (397 aa).

Mg(2+) is bound at residue asparagine 9. Lysine 16 contacts ATP. Arginine 87 contacts substrate. Aspartate 144 acts as the Proton donor/acceptor in catalysis. ATP contacts are provided by residues 204-208 (HLGNG), 279-281 (DCR), and 327-331 (GIGEN). Glutamate 381 serves as a coordination point for Mg(2+).

This sequence belongs to the acetokinase family. Homodimer. The cofactor is Mg(2+). It depends on Mn(2+) as a cofactor.

It localises to the cytoplasm. The enzyme catalyses acetate + ATP = acetyl phosphate + ADP. It functions in the pathway metabolic intermediate biosynthesis; acetyl-CoA biosynthesis; acetyl-CoA from acetate: step 1/2. Catalyzes the formation of acetyl phosphate from acetate and ATP. Can also catalyze the reverse reaction. In Chromobacterium violaceum (strain ATCC 12472 / DSM 30191 / JCM 1249 / CCUG 213 / NBRC 12614 / NCIMB 9131 / NCTC 9757 / MK), this protein is Acetate kinase.